Consider the following 680-residue polypeptide: Outer dense fiber protein 2 (680 aa).

Positions leucine 27 to aspartate 46 are disordered. 2 positions are modified to phosphoserine: serine 68 and serine 69. Threonine 87 is subject to Phosphothreonine. Serine 90 bears the Phosphoserine; by TSSK4 mark. Residues serine 101 and serine 104 each carry the phosphoserine modification. Phosphothreonine is present on threonine 105. Serine 110 and serine 124 each carry phosphoserine. Lysine 133 is covalently cross-linked (Glycyl lysine isopeptide (Lys-Gly) (interchain with G-Cter in SUMO2)). At serine 134 the chain carries Phosphoserine. Positions glutamine 139–aspartate 212 form a coiled coil. Threonine 226 is subject to Phosphothreonine. Serine 256 is modified (phosphoserine). 2 coiled-coil regions span residues lysine 275–leucine 418 and glutamate 456–arginine 630. Residues lysine 387–lysine 410 are disordered. Position 627 is a phosphoserine (serine 627). The interval arginine 632 to histidine 680 is disordered.

It belongs to the ODF2 family. As to quaternary structure, self-associates. Associates with microtubules and forms a fibrillar structure partially linked to the microtubule network. Interacts via its C-terminus with PLK1. Interacts with ODF1. Interacts with MARK4; the interaction is required for localization of ODF2 to centrioles. Interacts with TSSK4. Interacts with AKNA. Interacts with QRICH2. Interacts with CFAP58. Interacts with BBOF1. Interacts with CCDC38. Interacts with CCDC42. Tyrosine phosphorylated. Phosphorylated on Ser-90 by TSSK4.

The protein resides in the cytoplasm. The protein localises to the cytoskeleton. It is found in the microtubule organizing center. It localises to the centrosome. Its subcellular location is the cell projection. The protein resides in the cilium. The protein localises to the centriole. It is found in the spindle pole. It localises to the flagellum. In terms of biological role, seems to be a major component of sperm tail outer dense fibers (ODF). ODFs are filamentous structures located on the outside of the axoneme in the midpiece and principal piece of the mammalian sperm tail and may help to maintain the passive elastic structures and elastic recoil of the sperm tail. May have a modulating influence on sperm motility. Functions as a general scaffold protein that is specifically localized at the distal/subdistal appendages of mother centrioles. Component of the centrosome matrix required for the localization of PLK1 and NIN to the centrosomes. Required for the formation and/or maintenance of normal CETN1 assembly. The sequence is that of Outer dense fiber protein 2 (ODF2) from Pongo abelii (Sumatran orangutan).